The sequence spans 50 residues: Large ribosomal subunit protein eL39 (50 aa).

A compositionally biased stretch (basic residues) spans 1 to 12 (MGKKSKASKKRL). 2 disordered regions span residues 1-20 (MGKK…RQNS) and 30-50 (TNRD…DTDE).

It belongs to the eukaryotic ribosomal protein eL39 family.

This chain is Large ribosomal subunit protein eL39 (rpl39e), found in Halobacterium salinarum (strain ATCC 700922 / JCM 11081 / NRC-1) (Halobacterium halobium).